We begin with the raw amino-acid sequence, 1286 residues long: Structural maintenance of chromosomes protein 4 (1286 aa).

Residues 1-51 (MRRKGTKPSTACHQEEGPPPSQDGAHSDEEMEQPAGEAESAAPAKPPGEEL) are disordered. Phosphoserine is present on residues serine 21, serine 27, and serine 40. 111–118 (GPNGSGKS) lines the ATP pocket. The residue at position 141 (serine 141) is a Phosphoserine. Residues 270–589 (RRVEILNEHR…KVEEAKSSLA (320 aa)) adopt a coiled-coil conformation. N6-acetyllysine is present on residues lysine 379 and lysine 677. In terms of domain architecture, SMC hinge spans 611-725 (PGIYGRLGDL…ANNLDQATRV (115 aa)). 2 coiled-coil regions span residues 768 to 1018 (EISV…KLEQ) and 1068 to 1133 (ESIT…LNEF). Serine 980 carries the post-translational modification Phosphoserine.

This sequence belongs to the SMC family. SMC4 subfamily. In terms of assembly, forms a heterodimer with SMC2. Component of the condensin complex, which contains the SMC2 and SMC4 heterodimer, and three non SMC subunits that probably regulate the complex: BRRN1/CAPH, CNAP1/CAPD2 and CAPG.

Its subcellular location is the nucleus. The protein resides in the cytoplasm. It is found in the chromosome. Functionally, central component of the condensin complex, a complex required for conversion of interphase chromatin into mitotic-like condense chromosomes. The condensin complex probably introduces positive supercoils into relaxed DNA in the presence of type I topoisomerases and converts nicked DNA into positive knotted forms in the presence of type II topoisomerases. The polypeptide is Structural maintenance of chromosomes protein 4 (Smc4) (Mus musculus (Mouse)).